The following is a 326-amino-acid chain: DNA-directed RNA polymerase subunit alpha (326 aa).

The alpha N-terminal domain (alpha-NTD) stretch occupies residues 1–231 (MQTALLKPKI…DQLSVFAALE (231 aa)). The tract at residues 247–326 (IDPILLRPVD…ENWPPAGLEK (80 aa)) is alpha C-terminal domain (alpha-CTD).

This sequence belongs to the RNA polymerase alpha chain family. In terms of assembly, homodimer. The RNAP catalytic core consists of 2 alpha, 1 beta, 1 beta' and 1 omega subunit. When a sigma factor is associated with the core the holoenzyme is formed, which can initiate transcription.

It catalyses the reaction RNA(n) + a ribonucleoside 5'-triphosphate = RNA(n+1) + diphosphate. Its function is as follows. DNA-dependent RNA polymerase catalyzes the transcription of DNA into RNA using the four ribonucleoside triphosphates as substrates. The chain is DNA-directed RNA polymerase subunit alpha from Ralstonia nicotianae (strain ATCC BAA-1114 / GMI1000) (Ralstonia solanacearum).